We begin with the raw amino-acid sequence, 518 residues long: Subtilisin-like serine protease Cla h 9.0101 (518 aa).

A signal peptide spans 1-16 (MRGALAGLSLATLATA). Positions 17–138 (SPVLVNSIHN…ERDQEVHVLG (122 aa)) are cleaved as a propeptide — removed in mature form. The Inhibitor I9 domain occupies 44–136 (YMIKFKDHVT…LVERDQEVHV (93 aa)). A Peptidase S8 domain is found at 148–454 (PWGLARISHR…GGESNYSAIV (307 aa)). Active-site charge relay system residues include Asp184 and His216. Residues 244-298 (RSNGSGSMSDVVKGVEYAAESHLEQVSITKKGKRKGFKGSTANMSLGGGKSPILD) form an igE-binding region. Residues Asn246 and Asn286 are each glycosylated (N-linked (GlcNAc...) asparagine). The active-site Charge relay system is Ser382. N-linked (GlcNAc...) asparagine glycosylation occurs at Asn449. Residues 460–518 (KATHRPTMLEEIESEAKVASKKVYSEGDELAHKVAELTEKVEDLIAGELKDMFRELKRE) constitute a propeptide, removed in mature form.

The protein belongs to the peptidase S8 family.

Serine protease. This Davidiella tassiana (Mycosphaerella tassiana) protein is Subtilisin-like serine protease Cla h 9.0101.